The following is a 338-amino-acid chain: DNA-directed RNA polymerase subunit alpha (338 aa).

The segment at 1–234 is alpha N-terminal domain (alpha-NTD); sequence MIQKNWQELT…DQLNVFVNFE (234 aa). Residues 250-338 are alpha C-terminal domain (alpha-CTD); that stretch reads FNPALLKKVD…DLAKRFEEHY (89 aa).

It belongs to the RNA polymerase alpha chain family. As to quaternary structure, homodimer. The RNAP catalytic core consists of 2 alpha, 1 beta, 1 beta' and 1 omega subunit. When a sigma factor is associated with the core the holoenzyme is formed, which can initiate transcription.

The catalysed reaction is RNA(n) + a ribonucleoside 5'-triphosphate = RNA(n+1) + diphosphate. DNA-dependent RNA polymerase catalyzes the transcription of DNA into RNA using the four ribonucleoside triphosphates as substrates. In Methylocella silvestris (strain DSM 15510 / CIP 108128 / LMG 27833 / NCIMB 13906 / BL2), this protein is DNA-directed RNA polymerase subunit alpha.